A 313-amino-acid chain; its full sequence is Probable inactive peptidyl-prolyl cis-trans isomerase-like 6 (313 aa).

Residues 147–310 enclose the PPIase cyclophilin-type domain; it reads YLDICIDLSP…LLCSIADSGV (164 aa).

This sequence belongs to the cyclophilin-type PPIase family.

Functionally, probable inactive PPIase with no peptidyl-prolyl cis-trans isomerase activity. The polypeptide is Probable inactive peptidyl-prolyl cis-trans isomerase-like 6 (Mus musculus (Mouse)).